Consider the following 483-residue polypeptide: 6-phosphogluconate dehydrogenase, decarboxylating (483 aa).

Residues 10–15 (GLAVMG) and 33–35 (NRT) contribute to the NADP(+) site. Lysine 38 carries the N6-acetyllysine modification. Serine 57 carries the phosphoserine modification. NADP(+) contacts are provided by residues 75–77 (VKA) and asparagine 103. Asparagine 103, serine 129, and glycine 131 together coordinate substrate. At serine 129 the chain carries Phosphoserine. The active-site Proton acceptor is lysine 184. 187-188 (HN) provides a ligand contact to substrate. Residue glutamate 191 is the Proton donor of the active site. Substrate-binding residues include tyrosine 192, lysine 261, arginine 288, arginine 447, and histidine 453. NADP(+) is bound at residue 478–481 (SSSY).

This sequence belongs to the 6-phosphogluconate dehydrogenase family. Homodimer.

The protein localises to the cytoplasm. The catalysed reaction is 6-phospho-D-gluconate + NADP(+) = D-ribulose 5-phosphate + CO2 + NADPH. It functions in the pathway carbohydrate degradation; pentose phosphate pathway; D-ribulose 5-phosphate from D-glucose 6-phosphate (oxidative stage): step 3/3. Functionally, catalyzes the oxidative decarboxylation of 6-phosphogluconate to ribulose 5-phosphate and CO(2), with concomitant reduction of NADP to NADPH. This chain is 6-phosphogluconate dehydrogenase, decarboxylating (PGD), found in Ovis aries (Sheep).